Reading from the N-terminus, the 431-residue chain is MTWLSGLYSIFVASAAFCSLGLILVAVILLSRKFLIKVHPCKLKINNDDSLTKTVDSGKTLLSSLLDSGIAIPSPCGGKAACKQCKVRITKNADEPLETDRSTFSKQQLEQGWRLSCQTKVQHDLCLEVEERYFNASSWEGTVVSNENVATFIKELVLSVDPSRPIPFKPGGYLQITVPPYKTNTSDWKQTMDPQYYSDWETFHLFDQVIDNLSLDTDSANKAYSLASYPAELPLIKFNVRIATPPFVDQAPDPTIPWGVCSSYIFSLKPGDKVMISGPYGESFMKEDNRPVIFLIGGAGSSFGRSHILDLLLNKHSDRELTLWYGARSLKENIYQEEYEKLEKEFPNFHYHLVLSQPLQEDLDQGWDKNDPIKTNFLFKAFELRQLSHLPNPEDYLYYVCGPALHNSSILTLLDNYGIERSSIVLDDFGS.

The helical transmembrane segment at isoleucine 10–leucine 30 threads the bilayer. One can recognise a 2Fe-2S ferredoxin-type domain in the interval cysteine 41–tyrosine 133. [2Fe-2S] cluster-binding residues include cysteine 76, cysteine 82, cysteine 85, and cysteine 117. The region spanning alanine 136 to lysine 286 is the FAD-binding FR-type domain.

Belongs to the NqrF family. Composed of six subunits; NqrA, NqrB, NqrC, NqrD, NqrE and NqrF. The cofactor is [2Fe-2S] cluster. It depends on FAD as a cofactor.

The protein resides in the cell inner membrane. The catalysed reaction is a ubiquinone + n Na(+)(in) + NADH + H(+) = a ubiquinol + n Na(+)(out) + NAD(+). In terms of biological role, NQR complex catalyzes the reduction of ubiquinone-1 to ubiquinol by two successive reactions, coupled with the transport of Na(+) ions from the cytoplasm to the periplasm. The first step is catalyzed by NqrF, which accepts electrons from NADH and reduces ubiquinone-1 to ubisemiquinone by a one-electron transfer pathway. This chain is Na(+)-translocating NADH-quinone reductase subunit F, found in Chlamydia trachomatis serovar A (strain ATCC VR-571B / DSM 19440 / HAR-13).